Consider the following 150-residue polypeptide: Ribonuclease pancreatic delta-type (150 aa).

Positions 1–25 (MGLEKSFILFSLLVLVLGWVQPSLG) are cleaved as a signal peptide. Substrate is bound at residue R35. Residue H37 is the Proton acceptor of the active site. Intrachain disulfides connect C51–C110, C65–C121, C83–C136, and C90–C98. Residues 66-70 (KPVNT) and K91 contribute to the substrate site. H145 serves as the catalytic Proton donor.

It belongs to the pancreatic ribonuclease family. In terms of assembly, monomer.

It is found in the secreted. The catalysed reaction is an [RNA] containing cytidine + H2O = an [RNA]-3'-cytidine-3'-phosphate + a 5'-hydroxy-ribonucleotide-3'-[RNA].. It catalyses the reaction an [RNA] containing uridine + H2O = an [RNA]-3'-uridine-3'-phosphate + a 5'-hydroxy-ribonucleotide-3'-[RNA].. In terms of biological role, endonuclease that catalyzes the cleavage of RNA on the 3' side of pyrimidine nucleotides. Acts on single-stranded and double-stranded RNA. The polypeptide is Ribonuclease pancreatic delta-type (Rattus tiomanicus (Malayan field rat)).